The chain runs to 376 residues: TraB domain-containing protein (376 aa).

Residue Met-1 is modified to N-acetylmethionine. The segment at 1–34 (MDGEEQQPPHEANVEPVVPSEASEPVPRVLSGDP) is disordered. The segment covering 14–27 (VEPVVPSEASEPVP) has biased composition (low complexity). Thr-65 carries the post-translational modification Phosphothreonine.

The protein is TraB domain-containing protein (TRABD) of Homo sapiens (Human).